A 208-amino-acid chain; its full sequence is MAAAWPAGRASPAAGPPGLLRTLWLVTVAAGHCGAAASGAVGGEETPKCEDLRVGQYICKEPKINDATQEPVNCTNYTAHVQCFPAPKITCKDLSGNETHFTGSEVGFLKPISCRNVNGYSYKVAVALSLFLGWLGADRFYLGYPALGLLKFCTVGFCGIGSLIDFILISMQIVGPSDGSSYIIDYYGTRLTRLSITNETFRKTQLYP.

A signal peptide spans 1–37; it reads MAAAWPAGRASPAAGPPGLLRTLWLVTVAAGHCGAAA. Topologically, residues 38–129 are extracellular; that stretch reads SGAVGGEETP…YSYKVAVALS (92 aa). N73, N76, and N97 each carry an N-linked (GlcNAc...) asparagine glycan. Positions 119–167 constitute a TM2 domain; the sequence is GYSYKVAVALSLFLGWLGADRFYLGYPALGLLKFCTVGFCGIGSLIDFI. The chain crosses the membrane as a helical span at residues 130 to 150; sequence LFLGWLGADRFYLGYPALGLL. Topologically, residues 151 to 154 are cytoplasmic; the sequence is KFCT. The helical transmembrane segment at 155–175 threads the bilayer; sequence VGFCGIGSLIDFILISMQIVG. Over 176-208 the chain is Extracellular; that stretch reads PSDGSSYIIDYYGTRLTRLSITNETFRKTQLYP. N198 carries an N-linked (GlcNAc...) asparagine glycan.

This sequence belongs to the TM2 family. As to quaternary structure, interacts with APP beta-APP42 (amyloid-beta protein 42). N-glycosylated.

Its subcellular location is the membrane. Functionally, may participate in amyloid-beta-induced apoptosis via its interaction with beta-APP42. The protein is TM2 domain-containing protein 1 (Tm2d1) of Mus musculus (Mouse).